The primary structure comprises 310 residues: UPF0761 membrane protein VFMJ11_0098 (310 aa).

6 helical membrane passes run 34 to 54, 97 to 117, 136 to 156, 178 to 198, 207 to 227, and 242 to 262; these read YMAY…LSVL, MTAV…SSID, FSLY…SLAA, LLGW…YLLV, HALI…VGFA, and ALAA…IVLI.

It belongs to the UPF0761 family.

It localises to the cell inner membrane. The chain is UPF0761 membrane protein VFMJ11_0098 from Aliivibrio fischeri (strain MJ11) (Vibrio fischeri).